We begin with the raw amino-acid sequence, 597 residues long: Protein kinase C-like 3 (597 aa).

One can recognise a PB1 domain in the interval 12–95 (DIKLKTRFHG…AELNIHVFVG (84 aa)). The Phorbol-ester/DAG-type zinc finger occupies 127-177 (GHRFQGKRLNRRIQCFICHDYIWGIGRQGFRCVDCRLCVHKKCHRHVRTHC). A disordered region spans residues 181 to 238 (PQGPNVPVAPSSGVGSLRGGRLDTSSSTTRSGGGIDNGAFHEHEIESPGSAKDMSRST). Residues 253-522 (FRLLTVIGRG…LNDMKEHDFF (270 aa)) form the Protein kinase domain. Residues 259 to 267 (IGRGSYAKV) and lysine 282 each bind ATP. The active-site Proton acceptor is aspartate 377. Positions 524–595 (GFIDWEALEQ…VNPLQMSRED (72 aa)) constitute an AGC-kinase C-terminal domain.

This sequence belongs to the protein kinase superfamily. AGC Ser/Thr protein kinase family. PKC subfamily. In terms of assembly, interaction with par-3 required for the peripheral localization of par-6 and to form a par-3/par-6/pkc-3 complex, which is activated when cdc-42 interacts with par-6. Binds avidly to the phosphotyrosine interaction domain (PID) of a novel pkc-3 adapter protein num-1, which enables tethering and targeting of pkc-3 to the cell periphery. It depends on Mg(2+) as a cofactor.

The protein localises to the cytoplasm. The protein resides in the cytoskeleton. The enzyme catalyses L-seryl-[protein] + ATP = O-phospho-L-seryl-[protein] + ADP + H(+). It catalyses the reaction L-threonyl-[protein] + ATP = O-phospho-L-threonyl-[protein] + ADP + H(+). Its function is as follows. Required for the normal progression of embryogenesis and viability of the organism. Plays an indispensable role in establishing embryonic polarity and in recruiting and maintaining par-6 to the periphery, through interaction with par-3. Required for epithelial cell polarity in the distal spermatheca. Phosphorylates serine residues of num-1. Required for the expression of antimicrobial peptide nlp-29 in response in response to fungal infection or physical injury. This is Protein kinase C-like 3 from Caenorhabditis briggsae.